A 159-amino-acid polypeptide reads, in one-letter code: Ribosomal RNA large subunit methyltransferase H (159 aa).

S-adenosyl-L-methionine is bound by residues leucine 76, glycine 108, and 127-132 (FSKMTF).

Belongs to the RNA methyltransferase RlmH family. In terms of assembly, homodimer.

Its subcellular location is the cytoplasm. The catalysed reaction is pseudouridine(1915) in 23S rRNA + S-adenosyl-L-methionine = N(3)-methylpseudouridine(1915) in 23S rRNA + S-adenosyl-L-homocysteine + H(+). Its function is as follows. Specifically methylates the pseudouridine at position 1915 (m3Psi1915) in 23S rRNA. This Exiguobacterium sibiricum (strain DSM 17290 / CCUG 55495 / CIP 109462 / JCM 13490 / 255-15) protein is Ribosomal RNA large subunit methyltransferase H.